Consider the following 136-residue polypeptide: Piercer of microtubule wall 1 protein (136 aa).

The tract at residues 1–24 (MAEECPRACAEPVAPKATAPPERT) is disordered.

Belongs to the PIERCE1 family. Microtubule inner protein component of sperm flagellar doublet microtubules. Interacts with CFAP53, ODAD1 and ODAD3; the interactions link the outer dynein arms docking complex (ODA-DC) to the internal microtubule inner proteins (MIP) in cilium axoneme. As to expression, expressed in airway epithelial cells.

The protein localises to the cytoplasm. Its subcellular location is the cytoskeleton. It localises to the cilium axoneme. The protein resides in the flagellum axoneme. Microtubule inner protein involved in the attachment of outer dynein arms (ODAs) to dynein-decorated doublet microtubules (DMTs) in cilia axoneme, which is required for motile cilia beating. Functions at the initial step of left-right asymmetry specification of the visceral organs. The chain is Piercer of microtubule wall 1 protein from Homo sapiens (Human).